We begin with the raw amino-acid sequence, 382 residues long: Neuropeptide Y receptor type 1 (382 aa).

At 1-33 (MNSTLFSRVENYSVHYNVSENSPFLAFENDDCH) the chain is on the extracellular side. Residues N2, N11, and N17 are each glycosylated (N-linked (GlcNAc...) asparagine). A helical membrane pass occupies residues 34 to 54 (LPLAVIFTLALAYGAVIILGV). Topologically, residues 55 to 75 (SGNLALIIIILKQKEMRNVTN) are cytoplasmic. Residues 76-96 (ILIVNLSFSDLLVAVMCLPFT) form a helical membrane-spanning segment. Residues 97–115 (FVYTLMDHWVFGETMCKLN) are Extracellular-facing. C112 and C197 are oxidised to a cystine. The helical transmembrane segment at 116–136 (PFVQCVSITVSIFSLVLIAVE) threads the bilayer. Residues 137-153 (RHQLIINPRGWRPNNRH) lie on the Cytoplasmic side of the membrane. Residues 154 to 174 (AYIGITVIWVLAVASSLPFVI) traverse the membrane as a helical segment. The Extracellular segment spans residues 175 to 210 (YQILTDEPFQNVSLAAFKDKYVCFDKFPSDSHRLSY). A helical membrane pass occupies residues 211–231 (TTLLLVLQYFGPLCFIFICYF). Over 232–259 (KIYIRLKRRNNMMDKIRDSKYRSSETKR) the chain is Cytoplasmic. The helical transmembrane segment at 260–280 (INVMLLSIVVAFAVCWLPLTI) threads the bilayer. Over 281–298 (FNTVFDWNHQIIATCNHN) the chain is Extracellular. The helical transmembrane segment at 299-319 (LLFLLCHLTAMISTCVNPIFY) threads the bilayer. The Cytoplasmic portion of the chain corresponds to 320–382 (GFLNKNFQRD…KISMNDNEKI (63 aa)). C337 carries the S-palmitoyl cysteine lipid modification. Residues S367 and S375 each carry the phosphoserine modification.

Belongs to the G-protein coupled receptor 1 family. In terms of tissue distribution, brain.

Its subcellular location is the cell membrane. Receptor for neuropeptide Y and peptide YY. This chain is Neuropeptide Y receptor type 1 (Npy1r), found in Rattus norvegicus (Rat).